The primary structure comprises 559 residues: Beta-glucuronidase (559 aa).

The signal sequence occupies residues 1-19 (MKRILGLIAYASVPTVINA). Asn-53, Asn-91, Asn-99, and Asn-143 each carry an N-linked (GlcNAc...) asparagine glycan. The active-site Proton donor is the Glu-194. N-linked (GlcNAc...) asparagine glycans are attached at residues Asn-203, Asn-222, and Asn-280. Glu-312 (nucleophile) is an active-site residue. N-linked (GlcNAc...) asparagine glycosylation is found at Asn-427, Asn-440, Asn-465, Asn-491, and Asn-520.

It belongs to the glycosyl hydrolase 79 family.

Its subcellular location is the secreted. It carries out the reaction a beta-D-glucuronoside + H2O = D-glucuronate + an alcohol. In terms of biological role, beta-glucuronidase that hydrolyzes beta-glucuronosyl and 4-O-methyl-beta-glucuronosyl residues of arabinogalactan-protein. Hydrolyzed heparan sulfate only very weakly. Has no activity on xylan from birchwood. Able to catalyze the transglycosylation of glucuronic acid (GlcA) residues from p-nitrophenyl-beta-glucuronic acid (PNP beta-GlcA) to various monosaccharide acceptors such as glucose, galactose and xylose. The polypeptide is Beta-glucuronidase (Neurospora crassa (strain ATCC 24698 / 74-OR23-1A / CBS 708.71 / DSM 1257 / FGSC 987)).